Consider the following 731-residue polypeptide: DNA ligase (731 aa).

NAD(+) contacts are provided by residues 59-63 (DSEYD), 108-109 (SL), and Glu142. The N6-AMP-lysine intermediate role is filled by Lys144. NAD(+)-binding residues include Arg165, Glu202, Lys318, and Lys342. Residues Cys434, Cys437, Cys452, and Cys458 each coordinate Zn(2+). The 87-residue stretch at 645–731 (LASSPLSGKI…ENDGQDSIKI (87 aa)) folds into the BRCT domain.

It belongs to the NAD-dependent DNA ligase family. LigA subfamily. Mg(2+) is required as a cofactor. Mn(2+) serves as cofactor.

The enzyme catalyses NAD(+) + (deoxyribonucleotide)n-3'-hydroxyl + 5'-phospho-(deoxyribonucleotide)m = (deoxyribonucleotide)n+m + AMP + beta-nicotinamide D-nucleotide.. Its function is as follows. DNA ligase that catalyzes the formation of phosphodiester linkages between 5'-phosphoryl and 3'-hydroxyl groups in double-stranded DNA using NAD as a coenzyme and as the energy source for the reaction. It is essential for DNA replication and repair of damaged DNA. The polypeptide is DNA ligase (Zymomonas mobilis subsp. mobilis (strain ATCC 31821 / ZM4 / CP4)).